Consider the following 488-residue polypeptide: Glutamyl-tRNA(Gln) amidotransferase subunit A (488 aa).

Active-site charge relay system residues include lysine 77 and serine 152. Serine 176 functions as the Acyl-ester intermediate in the catalytic mechanism.

The protein belongs to the amidase family. GatA subfamily. In terms of assembly, heterotrimer of A, B and C subunits.

It catalyses the reaction L-glutamyl-tRNA(Gln) + L-glutamine + ATP + H2O = L-glutaminyl-tRNA(Gln) + L-glutamate + ADP + phosphate + H(+). Allows the formation of correctly charged Gln-tRNA(Gln) through the transamidation of misacylated Glu-tRNA(Gln) in organisms which lack glutaminyl-tRNA synthetase. The reaction takes place in the presence of glutamine and ATP through an activated gamma-phospho-Glu-tRNA(Gln). In Streptococcus pyogenes serotype M49 (strain NZ131), this protein is Glutamyl-tRNA(Gln) amidotransferase subunit A.